Reading from the N-terminus, the 198-residue chain is ATP-dependent Clp protease proteolytic subunit (198 aa).

Ser-98 functions as the Nucleophile in the catalytic mechanism. The active site involves His-123.

The protein belongs to the peptidase S14 family. In terms of assembly, fourteen ClpP subunits assemble into 2 heptameric rings which stack back to back to give a disk-like structure with a central cavity, resembling the structure of eukaryotic proteasomes.

It localises to the cytoplasm. The enzyme catalyses Hydrolysis of proteins to small peptides in the presence of ATP and magnesium. alpha-casein is the usual test substrate. In the absence of ATP, only oligopeptides shorter than five residues are hydrolyzed (such as succinyl-Leu-Tyr-|-NHMec, and Leu-Tyr-Leu-|-Tyr-Trp, in which cleavage of the -Tyr-|-Leu- and -Tyr-|-Trp bonds also occurs).. Cleaves peptides in various proteins in a process that requires ATP hydrolysis. Has a chymotrypsin-like activity. Plays a major role in the degradation of misfolded proteins. The polypeptide is ATP-dependent Clp protease proteolytic subunit (Bacillus velezensis (strain DSM 23117 / BGSC 10A6 / LMG 26770 / FZB42) (Bacillus amyloliquefaciens subsp. plantarum)).